Reading from the N-terminus, the 321-residue chain is Phospho-N-acetylmuramoyl-pentapeptide-transferase (321 aa).

The next 10 helical transmembrane spans lie at 1 to 21, 50 to 70, 76 to 96, 112 to 132, 140 to 160, 176 to 196, 200 to 220, 225 to 245, 250 to 270, and 300 to 320; these read MIFI…PILI, MGGL…IIFV, IILL…DDYI, FLAQ…FHLV, IPFV…IVFW, GLAT…SYML, AIGI…PYNL, VFMG…ISIM, LSLI…MLQV, and VVTV…WIGV.

This sequence belongs to the glycosyltransferase 4 family. MraY subfamily. Requires Mg(2+) as cofactor.

The protein resides in the cell membrane. The catalysed reaction is UDP-N-acetyl-alpha-D-muramoyl-L-alanyl-gamma-D-glutamyl-L-lysyl-D-alanyl-D-alanine + di-trans,octa-cis-undecaprenyl phosphate = Mur2Ac(oyl-L-Ala-gamma-D-Glu-L-Lys-D-Ala-D-Ala)-di-trans,octa-cis-undecaprenyl diphosphate + UMP. It participates in cell wall biogenesis; peptidoglycan biosynthesis. Functionally, catalyzes the initial step of the lipid cycle reactions in the biosynthesis of the cell wall peptidoglycan: transfers peptidoglycan precursor phospho-MurNAc-pentapeptide from UDP-MurNAc-pentapeptide onto the lipid carrier undecaprenyl phosphate, yielding undecaprenyl-pyrophosphoryl-MurNAc-pentapeptide, known as lipid I. This chain is Phospho-N-acetylmuramoyl-pentapeptide-transferase, found in Staphylococcus epidermidis (strain ATCC 35984 / DSM 28319 / BCRC 17069 / CCUG 31568 / BM 3577 / RP62A).